The following is a 322-amino-acid chain: GTP 3',8-cyclase (322 aa).

The Radical SAM core domain occupies 5 to 233; the sequence is KYGRVVDYLR…NAPASIYRLD (229 aa). Arg14 lines the GTP pocket. The [4Fe-4S] cluster site is built by Cys21 and Cys25. Tyr27 is a binding site for S-adenosyl-L-methionine. Cys28 contributes to the [4Fe-4S] cluster binding site. Arg64 serves as a coordination point for GTP. Gly68 is an S-adenosyl-L-methionine binding site. GTP is bound at residue Thr95. Residue Ser119 participates in S-adenosyl-L-methionine binding. Residue Lys155 participates in GTP binding. Position 189 (Met189) interacts with S-adenosyl-L-methionine. Positions 249 and 252 each coordinate [4Fe-4S] cluster. Position 254–256 (254–256) interacts with GTP; that stretch reads RIR. A [4Fe-4S] cluster-binding site is contributed by Cys266.

Belongs to the radical SAM superfamily. MoaA family. Monomer and homodimer. [4Fe-4S] cluster serves as cofactor.

The enzyme catalyses GTP + AH2 + S-adenosyl-L-methionine = (8S)-3',8-cyclo-7,8-dihydroguanosine 5'-triphosphate + 5'-deoxyadenosine + L-methionine + A + H(+). It functions in the pathway cofactor biosynthesis; molybdopterin biosynthesis. Its function is as follows. Catalyzes the cyclization of GTP to (8S)-3',8-cyclo-7,8-dihydroguanosine 5'-triphosphate. This Campylobacter curvus (strain 525.92) protein is GTP 3',8-cyclase.